The primary structure comprises 272 residues: Phosphonates import ATP-binding protein PhnC 1 (272 aa).

Residues Leu2–Asp246 enclose the ABC transporter domain. Residue Gly35–Ser42 coordinates ATP.

It belongs to the ABC transporter superfamily. Phosphonates importer (TC 3.A.1.9.1) family. As to quaternary structure, the complex is composed of two ATP-binding proteins (PhnC), two transmembrane proteins (PhnE) and a solute-binding protein (PhnD).

It is found in the cell inner membrane. It carries out the reaction phosphonate(out) + ATP + H2O = phosphonate(in) + ADP + phosphate + H(+). Part of the ABC transporter complex PhnCDE involved in phosphonates import. Responsible for energy coupling to the transport system. In Rhodopseudomonas palustris (strain BisB18), this protein is Phosphonates import ATP-binding protein PhnC 1.